The primary structure comprises 149 residues: 3-dehydroquinate dehydratase (149 aa).

Residue Tyr-24 is the Proton acceptor of the active site. Positions 75, 81, and 88 each coordinate substrate. His-101 serves as the catalytic Proton donor. Substrate-binding positions include 102 to 103 (LS) and Arg-112.

Belongs to the type-II 3-dehydroquinase family. In terms of assembly, homododecamer.

The catalysed reaction is 3-dehydroquinate = 3-dehydroshikimate + H2O. Its pathway is metabolic intermediate biosynthesis; chorismate biosynthesis; chorismate from D-erythrose 4-phosphate and phosphoenolpyruvate: step 3/7. In terms of biological role, catalyzes a trans-dehydration via an enolate intermediate. This Bartonella tribocorum (strain CIP 105476 / IBS 506) protein is 3-dehydroquinate dehydratase.